A 525-amino-acid polypeptide reads, in one-letter code: Lysine--tRNA ligase (525 aa).

The short motif at 40 to 48 (ASGIPHMGS) is the 'HIGH' region element. The short motif at 295-299 (KISKS) is the 'KMSKS' region element. K298 contributes to the ATP binding site.

The protein belongs to the class-I aminoacyl-tRNA synthetase family.

The protein resides in the cytoplasm. The enzyme catalyses tRNA(Lys) + L-lysine + ATP = L-lysyl-tRNA(Lys) + AMP + diphosphate. This chain is Lysine--tRNA ligase (lysS), found in Cenarchaeum symbiosum (strain A).